A 209-amino-acid chain; its full sequence is CASP-like protein 1B1 (209 aa).

Over residues 1–10 the composition is skewed to basic and acidic residues; it reads MDLERGDKKP. Positions 1–39 are disordered; it reads MDLERGDKKPPPPPPPAPRTAAATTTTTTTPACSGKKRP. At 1-49 the chain is on the cytoplasmic side; that stretch reads MDLERGDKKPPPPPPPAPRTAAATTTTTTTPACSGKKRPPLRDSLVALQ. Over residues 19-32 the composition is skewed to low complexity; that stretch reads RTAAATTTTTTTPA. The chain crosses the membrane as a helical span at residues 50–70; it reads PVLLRAAAALAAAAAAAVMAL. The Extracellular segment spans residues 71 to 100; it reads DAQSYTAVVAIVGTRPLTQTFTAKFSDTPA. Residues 101 to 121 traverse the membrane as a helical segment; sequence FVYFVIANAIAAAYNLLVLLV. Residues 122–134 lie on the Cytoplasmic side of the membrane; that stretch reads RRRRRTTAGLVVR. A helical membrane pass occupies residues 135 to 155; sequence MLDMVVMALLATGAAAAASMA. Residues 156–180 are Extracellular-facing; it reads ELGRNGNARARWNPVCDRFGSFCRR. A helical transmembrane segment spans residues 181-201; the sequence is GGAALAASFVGVALMLALNLL. The Cytoplasmic segment spans residues 202–209; it reads SAASGAGC.

This sequence belongs to the Casparian strip membrane proteins (CASP) family. As to quaternary structure, homodimer and heterodimers.

It is found in the cell membrane. This Zea mays (Maize) protein is CASP-like protein 1B1.